A 187-amino-acid chain; its full sequence is Elongation factor P (187 aa).

The protein belongs to the elongation factor P family.

It localises to the cytoplasm. It participates in protein biosynthesis; polypeptide chain elongation. Functionally, involved in peptide bond synthesis. Stimulates efficient translation and peptide-bond synthesis on native or reconstituted 70S ribosomes in vitro. Probably functions indirectly by altering the affinity of the ribosome for aminoacyl-tRNA, thus increasing their reactivity as acceptors for peptidyl transferase. This is Elongation factor P from Bifidobacterium animalis subsp. lactis (strain AD011).